Consider the following 115-residue polypeptide: Allergen Tha p 2 (115 aa).

An N-terminal signal peptide occupies residues 1–15; that stretch reads MKLLIFAILIALSSS.

This chain is Allergen Tha p 2, found in Thaumetopoea pityocampa (Pine processionary moth).